A 36-amino-acid polypeptide reads, in one-letter code: Fructose-1,6-/sedoheptulose-1,7-bisphosphate aldolase (36 aa).

The sequence is that of Fructose-1,6-/sedoheptulose-1,7-bisphosphate aldolase (cbbA) from Nitrobacter vulgaris.